The following is a 215-amino-acid chain: AN1-type zinc finger protein C1271.05c (215 aa).

Polar residues predominate over residues 116–128 (IPSISKSNLTNPP). The tract at residues 116–138 (IPSISKSNLTNPPLESEKSSDKA) is disordered. The segment at 144-193 (ATSRRRCCHPTCTRITLRLAGNCLHCNGRFCAAHRLMEDHDCVALFSLRK) adopts an AN1-type zinc-finger fold. Cys150, Cys155, Cys166, Cys169, Cys174, His177, His183, and Cys185 together coordinate Zn(2+).

The protein localises to the cytoplasm. It is found in the nucleus. The polypeptide is AN1-type zinc finger protein C1271.05c (Schizosaccharomyces pombe (strain 972 / ATCC 24843) (Fission yeast)).